A 281-amino-acid polypeptide reads, in one-letter code: UDP-N-acetylenolpyruvoylglucosamine reductase (281 aa).

Residues 17–180 (VGGKAKKLII…LSATFKFDNG (164 aa)) enclose the FAD-binding PCMH-type domain. The active site involves arginine 159. The active-site Proton donor is the serine 206. Glutamate 276 is an active-site residue.

This sequence belongs to the MurB family. FAD is required as a cofactor.

It is found in the cytoplasm. It catalyses the reaction UDP-N-acetyl-alpha-D-muramate + NADP(+) = UDP-N-acetyl-3-O-(1-carboxyvinyl)-alpha-D-glucosamine + NADPH + H(+). It participates in cell wall biogenesis; peptidoglycan biosynthesis. Its function is as follows. Cell wall formation. This is UDP-N-acetylenolpyruvoylglucosamine reductase from Fusobacterium nucleatum subsp. nucleatum (strain ATCC 25586 / DSM 15643 / BCRC 10681 / CIP 101130 / JCM 8532 / KCTC 2640 / LMG 13131 / VPI 4355).